Here is a 624-residue protein sequence, read N- to C-terminus: MCGIVGYVGQQPACAVVMAALRRMEYRGYDSSGVALVNGDGTLTVSRRAGRLANLEEAVAQLPPSALTGTTGLGHTRWATHGRPTDRNAHPHRDAAGKIAVVHNGIIENYAGLRHELEADGVEFASDTDTEVAVHLVAQAYRHGPTAGDFAASVLAVLRRLDGHFTLVFANADEPGTIVAARRSTPLVIGIGDGEMFVGSDVAAFIPHTRNAIELGQDQAVVLTADGYRITDFDGNDDLGPGAYREFHIDWDLAAAEKGGYEYFMLKEIAEQPAAVADTLLGHFVDGRIVLDEQRLSDQELREVDKVFVVACGTAYHSGLLAKYAIEHWTRLPVEVELASEFRYRDPVLDRSTLVVAISQSGETADTLEAVRHAKEQKAKVLAICNTNGSQIPRECDAVLYTRAGPEIGVASTKTFLAQITANYLVGLALAQARGTKYPDEVEREYHELEAMPDLVARVLATIKPVAALAQRFAQSPTVLFLGRHVGYPVALEGALKLKELAYMHAEGFAAGELKHGPIALIEDDLPVIVIMPSPKGSAVLHAKLLSNIREIQARGAITIVIAEEGDDTVRPYADHLIEIPSVSTLLQPLLSTIPLQVFAASVAQARGYDVDKPRNLAKSVTVE.

Cys2 serves as the catalytic Nucleophile; for GATase activity. One can recognise a Glutamine amidotransferase type-2 domain in the interval 2–226 (CGIVGYVGQQ…QDQAVVLTAD (225 aa)). SIS domains lie at 297 to 436 (SDQE…ARGT) and 469 to 614 (LAQR…VDKP). The active-site For Fru-6P isomerization activity is the Lys619.

In terms of assembly, homodimer.

The protein localises to the cytoplasm. It catalyses the reaction D-fructose 6-phosphate + L-glutamine = D-glucosamine 6-phosphate + L-glutamate. Catalyzes the first step in hexosamine metabolism, converting fructose-6P into glucosamine-6P using glutamine as a nitrogen source. This chain is Glutamine--fructose-6-phosphate aminotransferase [isomerizing], found in Mycolicibacterium paratuberculosis (strain ATCC BAA-968 / K-10) (Mycobacterium paratuberculosis).